Consider the following 372-residue polypeptide: Putative aminopeptidase SgcX (372 aa).

2 residues coordinate a divalent metal cation: His-67 and Asp-180. The Proton acceptor role is filled by Glu-212. Positions 213, 235, and 329 each coordinate a divalent metal cation.

Belongs to the peptidase M42 family. A divalent metal cation serves as cofactor.

This Salmonella typhimurium (strain LT2 / SGSC1412 / ATCC 700720) protein is Putative aminopeptidase SgcX (sgcX).